The following is a 484-amino-acid chain: HSPB1-associated protein 1 (484 aa).

The interval 1–26 (MAARPGAITNADSASGGGEEEGKHVK) is disordered. The interval 88 to 208 (ETACNYVEAT…EDTPFLYPTR (121 aa)) is interaction with HSPB1. The 165-residue stretch at 124–288 (WAYADYKYFV…HQTRVEEAIT (165 aa)) folds into the JmjC domain. Positions 396-429 (TPSSEEPSSERGGIFENDGEDFVSKNGKSFGKRQ) are disordered.

In terms of assembly, interacts with CRYAB and HSPB1.

The protein localises to the cytoplasm. In terms of biological role, may play a role in cellular stress response. This is HSPB1-associated protein 1 (HSPBAP1) from Bos taurus (Bovine).